We begin with the raw amino-acid sequence, 426 residues long: D-tagatose-1,6-bisphosphate aldolase subunit KbaZ (426 aa).

The protein belongs to the GatZ/KbaZ family. KbaZ subfamily. Forms a complex with KbaY.

It participates in carbohydrate metabolism; D-tagatose 6-phosphate degradation; D-glyceraldehyde 3-phosphate and glycerone phosphate from D-tagatose 6-phosphate: step 2/2. In terms of biological role, component of the tagatose-1,6-bisphosphate aldolase KbaYZ that is required for full activity and stability of the Y subunit. Could have a chaperone-like function for the proper and stable folding of KbaY. When expressed alone, KbaZ does not show any aldolase activity. In Escherichia coli O81 (strain ED1a), this protein is D-tagatose-1,6-bisphosphate aldolase subunit KbaZ.